A 249-amino-acid polypeptide reads, in one-letter code: AA9 family lytic polysaccharide monooxygenase A (249 aa).

The N-terminal stretch at 1–21 is a signal peptide; the sequence is MALSKIAALSTILASASLVAG. His22 serves as a coordination point for Cu(2+). Residue His22 is modified to Methylhistidine. Residues Asn34 and Asn80 are each glycosylated (N-linked (GlcNAc...) asparagine). 2 cysteine pairs are disulfide-bonded: Cys77–Cys199 and Cys118–Cys122. His107 provides a ligand contact to Cu(2+). O2 is bound by residues His185 and Gln194. Tyr196 lines the Cu(2+) pocket.

It belongs to the polysaccharide monooxygenase AA9 family. The cofactor is Cu(2+). Post-translationally, the catalytically essential N-terminal histidine His-22 is post-translationally modified by methylation to prevent protonation of the histidine side chain, and protect the critical active site of the enzyme from oxidative damage.

It is found in the secreted. The enzyme catalyses [(1-&gt;4)-beta-D-glucosyl]n+m + reduced acceptor + O2 = 4-dehydro-beta-D-glucosyl-[(1-&gt;4)-beta-D-glucosyl]n-1 + [(1-&gt;4)-beta-D-glucosyl]m + acceptor + H2O.. Its function is as follows. Lytic polysaccharide monooxygenase (LPMO) that exhibits a mixed C1/C4 oxidative cleavage activity on cellulose and xyloglucan. Catalysis by LPMOs requires the reduction of the active-site copper from Cu(II) to Cu(I) by a reducing agent and H(2)O(2) or O(2) as a cosubstrate. Shows a higher boosting effect with cellulases on the enzymatic saccharification of complex lignocellulosic substrates associated with xyloglucan than on the lignocellulosic substrates without xyloglucan. The oxidative cleavage of xyloglucan by LPMO9A may facilitate to open up the sterical hindrance of cellulose by xyloglucan and thereby increase accessibility for cellulase to lignocellulosic substrates. This chain is AA9 family lytic polysaccharide monooxygenase A, found in Penicillium parvum (Eupenicillium parvum).